We begin with the raw amino-acid sequence, 477 residues long: Cytochrome P450 708A2 (477 aa).

The chain crosses the membrane as a helical span at residues 3-23; sequence FVWSAAVWVIAVAAVVISKWL. Cys426 is a heme binding site.

It belongs to the cytochrome P450 family. Heme is required as a cofactor. Expressed primarily in the root epidermis.

The protein resides in the membrane. Hydroxylates thalianol into thalian-diol. This Arabidopsis thaliana (Mouse-ear cress) protein is Cytochrome P450 708A2 (CYP708A2).